A 90-amino-acid chain; its full sequence is Small ribosomal subunit protein bS16 (90 aa).

This sequence belongs to the bacterial ribosomal protein bS16 family.

The protein is Small ribosomal subunit protein bS16 of Listeria monocytogenes serotype 4b (strain F2365).